Here is a 215-residue protein sequence, read N- to C-terminus: Outer membrane protein assembly factor BamC homolog (215 aa).

The N-terminal stretch at 1–16 (MKKIILNLVTAIILAG) is a signal peptide. Cys-17 carries the N-palmitoyl cysteine lipid modification. Cys-17 carries S-diacylglycerol cysteine lipidation.

Belongs to the BamC family.

The protein localises to the cell outer membrane. In Haemophilus influenzae (strain ATCC 51907 / DSM 11121 / KW20 / Rd), this protein is Outer membrane protein assembly factor BamC homolog.